Reading from the N-terminus, the 563-residue chain is CTP synthase (563 aa).

Residues 1-278 (MAKATAKNSA…DLRVLEQLHL (278 aa)) are amidoligase domain. Ser24 is a binding site for CTP. Ser24 lines the UTP pocket. 25–30 (SLGKGI) lines the ATP pocket. Position 65 (Tyr65) interacts with L-glutamine. Asp82 is a binding site for ATP. Residues Asp82 and Glu151 each contribute to the Mg(2+) site. CTP is bound by residues 158 to 160 (DIE), 198 to 203 (KTKPSQ), and Lys234. Residues 198–203 (KTKPSQ) and Lys234 contribute to the UTP site. Residue 250–252 (KDV) participates in ATP binding. The Glutamine amidotransferase type-1 domain maps to 303-545 (TIALVGKYIA…VKAALEQKKA (243 aa)). Gly363 is a binding site for L-glutamine. The active-site Nucleophile; for glutamine hydrolysis is the Cys390. L-glutamine is bound by residues 391–394 (LGMQ), Glu414, and Arg471. Catalysis depends on residues His518 and Glu520. Residues 542–563 (QKKANGKKPTAPSEKTKKTKTK) are disordered.

The protein belongs to the CTP synthase family. As to quaternary structure, homotetramer.

It catalyses the reaction UTP + L-glutamine + ATP + H2O = CTP + L-glutamate + ADP + phosphate + 2 H(+). The enzyme catalyses L-glutamine + H2O = L-glutamate + NH4(+). The catalysed reaction is UTP + NH4(+) + ATP = CTP + ADP + phosphate + 2 H(+). Its pathway is pyrimidine metabolism; CTP biosynthesis via de novo pathway; CTP from UDP: step 2/2. With respect to regulation, allosterically activated by GTP, when glutamine is the substrate; GTP has no effect on the reaction when ammonia is the substrate. The allosteric effector GTP functions by stabilizing the protein conformation that binds the tetrahedral intermediate(s) formed during glutamine hydrolysis. Inhibited by the product CTP, via allosteric rather than competitive inhibition. Catalyzes the ATP-dependent amination of UTP to CTP with either L-glutamine or ammonia as the source of nitrogen. Regulates intracellular CTP levels through interactions with the four ribonucleotide triphosphates. The chain is CTP synthase from Fibrobacter succinogenes (strain ATCC 19169 / S85).